We begin with the raw amino-acid sequence, 454 residues long: Ribosomal protein uS12 methylthiotransferase RimO (454 aa).

An MTTase N-terminal domain is found at 14-125; that stretch reads SKVAFSHVGC…IAKVLDRVEQ (112 aa). Residues Cys23, Cys59, Cys88, Cys163, Cys167, and Cys170 each contribute to the [4Fe-4S] cluster site. A Radical SAM core domain is found at 149 to 378; that stretch reads DKNKFVAYLR…ISVQQNISKD (230 aa). Residues 381 to 452 form the TRAM domain; the sequence is QTYVGSKMKI…EYDLYGEIIK (72 aa).

The protein belongs to the methylthiotransferase family. RimO subfamily. Requires [4Fe-4S] cluster as cofactor.

Its subcellular location is the cytoplasm. The enzyme catalyses L-aspartate(89)-[ribosomal protein uS12]-hydrogen + (sulfur carrier)-SH + AH2 + 2 S-adenosyl-L-methionine = 3-methylsulfanyl-L-aspartate(89)-[ribosomal protein uS12]-hydrogen + (sulfur carrier)-H + 5'-deoxyadenosine + L-methionine + A + S-adenosyl-L-homocysteine + 2 H(+). In terms of biological role, catalyzes the methylthiolation of an aspartic acid residue of ribosomal protein uS12. The polypeptide is Ribosomal protein uS12 methylthiotransferase RimO (Prochlorococcus marinus (strain AS9601)).